The following is a 642-amino-acid chain: Chaperone protein DnaK (642 aa).

Thr-196 is subject to Phosphothreonine; by autocatalysis. The span at 593-603 (STMYQTPSGDT) shows a compositional bias: polar residues. Positions 593-642 (STMYQTPSGDTPPSEPETGASEESKGGDKTQGDGEVDAEYEVIDGNDKDK) are disordered. Basic and acidic residues predominate over residues 614 to 624 (EESKGGDKTQG). The span at 626 to 636 (GEVDAEYEVID) shows a compositional bias: acidic residues.

Belongs to the heat shock protein 70 family.

In terms of biological role, acts as a chaperone. This is Chaperone protein DnaK from Chlorobium phaeobacteroides (strain BS1).